The sequence spans 433 residues: 23S rRNA (uracil(1939)-C(5))-methyltransferase RlmD (433 aa).

The 59-residue stretch at 10–68 (RTTTRQIITVSVNDLDSFGQGVARHNGKTLFIPGLLPQENAEVTVTEDKKQYARAKVVR) folds into the TRAM domain. Cys81, Cys87, Cys90, and Cys162 together coordinate [4Fe-4S] cluster. S-adenosyl-L-methionine contacts are provided by Gln265, Phe294, Asn299, Glu315, Asn342, and Asp363. Cys389 acts as the Nucleophile in catalysis.

This sequence belongs to the class I-like SAM-binding methyltransferase superfamily. RNA M5U methyltransferase family. RlmD subfamily.

It carries out the reaction uridine(1939) in 23S rRNA + S-adenosyl-L-methionine = 5-methyluridine(1939) in 23S rRNA + S-adenosyl-L-homocysteine + H(+). Its function is as follows. Catalyzes the formation of 5-methyl-uridine at position 1939 (m5U1939) in 23S rRNA. The sequence is that of 23S rRNA (uracil(1939)-C(5))-methyltransferase RlmD from Shigella boydii serotype 4 (strain Sb227).